The chain runs to 472 residues: Glutamate-1-semialdehyde 2,1-aminomutase 2, chloroplastic (472 aa).

A chloroplast-targeting transit peptide spans 1-36 (MAATLTGSGIALGFSCSAKFSKRASSSSNRRCIKMS). Lysine 312 is subject to N6-(pyridoxal phosphate)lysine.

It belongs to the class-III pyridoxal-phosphate-dependent aminotransferase family. HemL subfamily. In terms of assembly, homodimer. Requires pyridoxal 5'-phosphate as cofactor. In terms of tissue distribution, expressed in leaf primordia and shoot apical meristems (SAM).

It localises to the plastid. Its subcellular location is the chloroplast. It carries out the reaction (S)-4-amino-5-oxopentanoate = 5-aminolevulinate. Its pathway is porphyrin-containing compound metabolism; protoporphyrin-IX biosynthesis; 5-aminolevulinate from L-glutamyl-tRNA(Glu): step 2/2. The protein operates within porphyrin-containing compound metabolism; chlorophyll biosynthesis. Transaminase converting glutamate 1-semialdehyde (GSA) to 5-aminolevulinate (ALA). Involved in the biosynthesis of tetrapyrroles. In Arabidopsis thaliana (Mouse-ear cress), this protein is Glutamate-1-semialdehyde 2,1-aminomutase 2, chloroplastic.